A 942-amino-acid chain; its full sequence is Protein NLP1 (942 aa).

Over residues 1-11 (MEQKPSPPPPP) the composition is skewed to pro residues. Disordered regions lie at residues 1 to 32 (MEQKPSPPPPPRSDEEEDGLMGCGMGGTGDIA), 77 to 106 (TTPAPAAGEDDRDEAEMPSRGGGGLEVSPA), 594 to 620 (VKENTCSSDPSNSNSDKAVEKRRTKTE), 723 to 753 (FQLEPSVPDRPCEGRFTSHTSGSNSISPSCS), and 759 to 778 (SLGCSSVPKTQQQHGSAPQL). Residues 21 to 32 (MGCGMGGTGDIA) show a composition bias toward gly residues. Positions 597 to 609 (NTCSSDPSNSNSD) are enriched in polar residues. Residues 609–690 (DKAVEKRRTK…IDSVHGPEGT (82 aa)) form the RWP-RK domain. The segment covering 743–753 (SGSNSISPSCS) has biased composition (low complexity). Residues 765–774 (VPKTQQQHGS) are compositionally biased toward polar residues. One can recognise a PB1 domain in the interval 844–927 (SLKIKAIYGE…QTVRILVNPS (84 aa)).

The protein localises to the nucleus. Functionally, probable transcription factor. This Oryza sativa subsp. japonica (Rice) protein is Protein NLP1 (NLP1).